The primary structure comprises 1207 residues: Ras GTPase-activating protein gap-2 (1207 aa).

Disordered regions lie at residues 1 to 29 (MKVIDEKPEDEEEEKDSGSKCKTPSSCTK) and 221 to 316 (RMSS…GSLR). One can recognise a PH domain in the interval 40-383 (PPICHGWLIV…WMENLRKTMN (344 aa)). A compositionally biased stretch (low complexity) spans 223–236 (SSSSHNLSTRLSGS). 2 stretches are compositionally biased toward polar residues: residues 237–247 (TQNLNQPTNAY) and 286–297 (ASNTPSRDSSLY). In terms of domain architecture, C2 spans 374–490 (WMENLRKTMN…SSRSPVERWY (117 aa)). The segment covering 495 to 504 (SHSDSGTSRI) has biased composition (polar residues). Residues 495 to 516 (SHSDSGTSRIASALGGKSSSQE) form a disordered region. Residues 579-789 (NLAKEFLCDL…HRMKDFLLRI (211 aa)) enclose the Ras-GAP domain. Disordered stretches follow at residues 856 to 903 (GVFH…LGRS), 923 to 1013 (FQTP…SSSS), 1086 to 1107 (ATGGVNAQNRLSLPRTNPRASR), and 1163 to 1207 (LKSK…VVPN). Composition is skewed to polar residues over residues 862 to 876 (MVQQPSSDYENSPQQ) and 891 to 903 (TPPTGQATVLGRS). A compositionally biased stretch (low complexity) spans 939-953 (TGTSSSRTSDKTTSS). Basic and acidic residues predominate over residues 955-972 (EIRDDTDSDFELREDRGR). Low complexity predominate over residues 985–1013 (ASPSSSQQASSGYLSNNPSRSSYSNSSSS). Residues 1181-1207 (SGASEDSYDSLSSLDRPSRQSLVVVPN) show a composition bias toward low complexity.

Mainly expressed in gonads and vulval cells. Isoform c in expressed in pharyngeal epithelial cells and several rectal/blast cells in the tail region. Isoform f is weakly expressed in four cells symmetrically located in the vulval region. Isoform g is strongly expressed in the pharyngeal muscle cells m6 in addition to several cells in the tail region.

The protein resides in the cytoplasm. GTPase-activating protein, which acts as a negative regulator for the member of the Ras family let-60. Probably decreases the signaling activity of Ras by stimulating its intrinsic GTPase activity, thereby lowering the levels of GTP-bound, active Ras. The different isoforms may play a distinct role in specific tissues. The chain is Ras GTPase-activating protein gap-2 (gap-2) from Caenorhabditis elegans.